The following is a 129-amino-acid chain: ATP synthase epsilon chain (129 aa).

This sequence belongs to the ATPase epsilon chain family. As to quaternary structure, F-type ATPases have 2 components, CF(1) - the catalytic core - and CF(0) - the membrane proton channel. CF(1) has five subunits: alpha(3), beta(3), gamma(1), delta(1), epsilon(1). CF(0) has three main subunits: a, b and c.

It localises to the cell inner membrane. Functionally, produces ATP from ADP in the presence of a proton gradient across the membrane. The polypeptide is ATP synthase epsilon chain (Nitratiruptor sp. (strain SB155-2)).